Reading from the N-terminus, the 338-residue chain is tRNA-cytidine(32) 2-sulfurtransferase (338 aa).

The PP-loop motif signature appears at 86–91 (SGGKDS). Positions 161, 164, and 252 each coordinate [4Fe-4S] cluster.

Belongs to the TtcA family. In terms of assembly, homodimer. It depends on Mg(2+) as a cofactor. [4Fe-4S] cluster is required as a cofactor.

The protein localises to the cytoplasm. It catalyses the reaction cytidine(32) in tRNA + S-sulfanyl-L-cysteinyl-[cysteine desulfurase] + AH2 + ATP = 2-thiocytidine(32) in tRNA + L-cysteinyl-[cysteine desulfurase] + A + AMP + diphosphate + H(+). The protein operates within tRNA modification. Catalyzes the ATP-dependent 2-thiolation of cytidine in position 32 of tRNA, to form 2-thiocytidine (s(2)C32). The sulfur atoms are provided by the cysteine/cysteine desulfurase (IscS) system. The protein is tRNA-cytidine(32) 2-sulfurtransferase of Albidiferax ferrireducens (strain ATCC BAA-621 / DSM 15236 / T118) (Rhodoferax ferrireducens).